We begin with the raw amino-acid sequence, 177 residues long: Large ribosomal subunit protein uL6 (177 aa).

It belongs to the universal ribosomal protein uL6 family. In terms of assembly, part of the 50S ribosomal subunit.

In terms of biological role, this protein binds to the 23S rRNA, and is important in its secondary structure. It is located near the subunit interface in the base of the L7/L12 stalk, and near the tRNA binding site of the peptidyltransferase center. The protein is Large ribosomal subunit protein uL6 of Paracoccus denitrificans (strain Pd 1222).